The primary structure comprises 195 residues: Shikimate kinase (195 aa).

ATP is bound at residue 21–26 (GTGKTS). Thr-25 is a Mg(2+) binding site. Positions 43, 67, and 89 each coordinate substrate. The tract at residues 128-148 (REQRPSFSGKASTEISEETMR) is disordered. Arg-131 provides a ligand contact to ATP. Residues 132-141 (PSFSGKASTE) show a composition bias toward polar residues. Arg-158 lines the substrate pocket.

Belongs to the shikimate kinase family. In terms of assembly, monomer. Mg(2+) is required as a cofactor.

Its subcellular location is the cytoplasm. It catalyses the reaction shikimate + ATP = 3-phosphoshikimate + ADP + H(+). Its pathway is metabolic intermediate biosynthesis; chorismate biosynthesis; chorismate from D-erythrose 4-phosphate and phosphoenolpyruvate: step 5/7. Catalyzes the specific phosphorylation of the 3-hydroxyl group of shikimic acid using ATP as a cosubstrate. This chain is Shikimate kinase, found in Syntrophus aciditrophicus (strain SB).